The following is a 569-amino-acid chain: Phospholipase B-like protein D (569 aa).

The N-terminal stretch at 1-22 (MIIFKNLLKLLIILLTIKLYFC) is a signal peptide. 5 N-linked (GlcNAc...) asparagine glycosylation sites follow: Asn-93, Asn-126, Asn-181, Asn-425, and Asn-430.

This sequence belongs to the phospholipase B-like family.

Its subcellular location is the secreted. Functionally, probable phospholipase. This Dictyostelium discoideum (Social amoeba) protein is Phospholipase B-like protein D (plbD).